The chain runs to 189 residues: Inner membrane-spanning protein YciB (189 aa).

A run of 5 helical transmembrane segments spans residues 23 to 43 (ILLA…FVWW), 54 to 74 (ITLA…DAAF), 82 to 102 (VNWL…KTLI), 120 to 140 (LNLA…YVFK), and 150 to 170 (FKLF…GVYL).

The protein belongs to the YciB family.

It is found in the cell inner membrane. Functionally, plays a role in cell envelope biogenesis, maintenance of cell envelope integrity and membrane homeostasis. In Chromohalobacter salexigens (strain ATCC BAA-138 / DSM 3043 / CIP 106854 / NCIMB 13768 / 1H11), this protein is Inner membrane-spanning protein YciB.